The primary structure comprises 188 residues: CXXC-type zinc finger protein 4 (188 aa).

The disordered stretch occupies residues 1–20 (MHRNDSQRLGKPGGAPESLQ). The CXXC-type zinc-finger motif lies at 122–163 (AKKKRKRCGVCVPCKRLINCGVCSSCRNRKTGHQICKFRKCE). Cys-129, Cys-132, Cys-135, Cys-141, Cys-144, Cys-147, Cys-157, and Cys-162 together coordinate Zn(2+).

The protein resides in the cytoplasm. Acts as a negative regulator of the Wnt signaling pathway required for anterior neural structure formation. Binds preferentially to DNA containing cytidine-phosphate-guanosine (CpG) dinucleotides over CpH (H=A, T, and C), hemimethylated-CpG and hemimethylated-hydroxymethyl-CpG. This Xenopus tropicalis (Western clawed frog) protein is CXXC-type zinc finger protein 4 (cxxc4).